Here is a 523-residue protein sequence, read N- to C-terminus: Glutamate--cysteine ligase, chloroplastic (523 aa).

Cys-187 and Cys-407 form a disulfide bridge.

The protein belongs to the carboxylate-amine ligase family. Glutamate--cysteine ligase type 2 subfamily. As to quaternary structure, homodimer or monomer when oxidized or reduced, respectively. The Cys-187-Cys-407 disulfide bridge is known to modulate the enzyme activity according to the redox status. The oxidized form constitutes the active enzyme.

It localises to the plastid. The protein resides in the chloroplast. It catalyses the reaction L-cysteine + L-glutamate + ATP = gamma-L-glutamyl-L-cysteine + ADP + phosphate + H(+). Its pathway is sulfur metabolism; glutathione biosynthesis; glutathione from L-cysteine and L-glutamate: step 1/2. This Solanum lycopersicum (Tomato) protein is Glutamate--cysteine ligase, chloroplastic (GSH1).